The sequence spans 92 residues: Large ribosomal subunit protein eL43 (92 aa).

Cysteine 39, cysteine 42, cysteine 57, and cysteine 60 together coordinate Zn(2+). A C4-type zinc finger spans residues 39 to 60 (CSFCGKTKMKRRAVGIWHCGSC).

This sequence belongs to the eukaryotic ribosomal protein eL43 family. Component of the large ribosomal subunit.

It is found in the cytoplasm. In terms of biological role, component of the large ribosomal subunit. The ribosome is a large ribonucleoprotein complex responsible for the synthesis of proteins in the cell. This chain is Large ribosomal subunit protein eL43 (Rpl37a), found in Mus musculus (Mouse).